The chain runs to 317 residues: Sulfate adenylyltransferase subunit 2 (317 aa).

Over residues 1–10 (MSNAVHETDS) the composition is skewed to basic and acidic residues. 2 disordered regions span residues 1-21 (MSNA…PPLD) and 298-317 (RAID…EGYF).

The protein belongs to the PAPS reductase family. CysD subfamily. In terms of assembly, heterodimer composed of CysD, the smaller subunit, and CysN.

The catalysed reaction is sulfate + ATP + H(+) = adenosine 5'-phosphosulfate + diphosphate. It functions in the pathway sulfur metabolism; hydrogen sulfide biosynthesis; sulfite from sulfate: step 1/3. With CysN forms the ATP sulfurylase (ATPS) that catalyzes the adenylation of sulfate producing adenosine 5'-phosphosulfate (APS) and diphosphate, the first enzymatic step in sulfur assimilation pathway. APS synthesis involves the formation of a high-energy phosphoric-sulfuric acid anhydride bond driven by GTP hydrolysis by CysN coupled to ATP hydrolysis by CysD. The chain is Sulfate adenylyltransferase subunit 2 from Agrobacterium fabrum (strain C58 / ATCC 33970) (Agrobacterium tumefaciens (strain C58)).